Here is a 479-residue protein sequence, read N- to C-terminus: Signal recognition particle subunit SRP54 1 (479 aa).

The G-domain stretch occupies residues Met1–Leu295. GTP contacts are provided by residues Gly108 to Thr115, Asp190 to Arg194, and Thr248 to Asp251. The interval Gly296–Lys479 is M-domain.

Belongs to the GTP-binding SRP family. SRP54 subfamily. Component of a signal recognition particle (SRP) complex that consists of a 7SL RNA molecule of 300 nucleotides and six protein subunits: SRP72, SRP68, SRP54, SRP19, SRP14 and SRP9.

Its subcellular location is the cytoplasm. It localises to the endoplasmic reticulum. The catalysed reaction is GTP + H2O = GDP + phosphate + H(+). Functionally, component of the signal recognition particle (SRP) complex, a ribonucleoprotein complex that mediates the cotranslational targeting of secretory and membrane proteins to the endoplasmic reticulum (ER). As part of the SRP complex, associates with the SRP receptor (SR) component SRPRA to target secretory proteins to the endoplasmic reticulum membrane. Binds to the signal sequence of presecretory proteins when they emerge from the ribosomes. Displays basal GTPase activity, and stimulates reciprocal GTPase activation of the SR subunit SRPRA. Forms a guanosine 5'-triphosphate (GTP)-dependent complex with the SR subunit SRPRA. SR compaction and GTPase mediated rearrangement of SR drive SRP-mediated cotranslational protein translocation into the ER. Requires the presence of SRP9/SRP14 and/or SRP19 to stably interact with RNA. The sequence is that of Signal recognition particle subunit SRP54 1 (SRP-54A) from Arabidopsis thaliana (Mouse-ear cress).